The primary structure comprises 505 residues: ATP synthase subunit alpha (505 aa).

170-177 is an ATP binding site; sequence GDRQTGKT.

Belongs to the ATPase alpha/beta chains family. F-type ATPases have 2 components, CF(1) - the catalytic core - and CF(0) - the membrane proton channel. CF(1) has five subunits: alpha(3), beta(3), gamma(1), delta(1), epsilon(1). CF(0) has four main subunits: a(1), b(1), b'(1) and c(9-12).

It is found in the cellular thylakoid membrane. It catalyses the reaction ATP + H2O + 4 H(+)(in) = ADP + phosphate + 5 H(+)(out). Its function is as follows. Produces ATP from ADP in the presence of a proton gradient across the membrane. The alpha chain is a regulatory subunit. In Prochlorococcus marinus (strain MIT 9303), this protein is ATP synthase subunit alpha.